Reading from the N-terminus, the 306-residue chain is Golgi to ER traffic protein 2 (306 aa).

Basic and acidic residues predominate over residues 1-18 (MSEISDAEKRRILREKRQ). Positions 1-100 (MSEISDAEKR…PPGSAEQQNG (100 aa)) are disordered. At 1-172 (MSEISDAEKR…VEAHNIAVNK (172 aa)) the chain is on the cytoplasmic side. The segment covering 34 to 57 (TGQTENSFLSTESPLDSRESTYPA) has biased composition (polar residues). A compositionally biased stretch (basic and acidic residues) spans 68–77 (DSTKQMDELL). A compositionally biased stretch (low complexity) spans 78-90 (AKATSKTTSKASS). Over residues 91-100 (PPGSAEQQNG) the composition is skewed to polar residues. A helical transmembrane segment spans residues 173–193 (LKSYTILVKWLFFLLPYLYYI). Over 194–214 (THSARDPFQHNAVNYVLDRSN) the chain is Lumenal. The helical transmembrane segment at 215–234 (FFTVFTTFEIVALSVYYQLL) threads the bilayer. Residues 235–281 (MSAEKSHNVNTLDNNSKILKLVSMVPPGLVPIPNLRGKVAQALQYWD) lie on the Cytoplasmic side of the membrane. Residues 282 to 302 (VVSMYLTDLCFAIVLAGLFQY) traverse the membrane as a helical segment. At 303 to 306 (YHSM) the chain is on the lumenal side.

Belongs to the GET2 family. As to quaternary structure, component of the Golgi to ER traffic (GET) complex, which is composed of GET1, GET2 and GET3. Within the complex, GET1 and GET2 form a heterotetramer which is stabilized by phosphatidylinositol binding and which binds to the GET3 homodimer.

The protein resides in the endoplasmic reticulum membrane. Its subcellular location is the golgi apparatus membrane. In terms of biological role, required for the post-translational delivery of tail-anchored (TA) proteins to the endoplasmic reticulum. Together with GET1, acts as a membrane receptor for soluble GET3, which recognizes and selectively binds the transmembrane domain of TA proteins in the cytosol. The GET complex cooperates with the HDEL receptor ERD2 to mediate the ATP-dependent retrieval of resident ER proteins that contain a C-terminal H-D-E-L retention signal from the Golgi to the ER. This Lachancea thermotolerans (strain ATCC 56472 / CBS 6340 / NRRL Y-8284) (Yeast) protein is Golgi to ER traffic protein 2.